Consider the following 98-residue polypeptide: UPF0213 protein BPUM_0019 (98 aa).

One can recognise a GIY-YIG domain in the interval 4 to 79; sequence HNHYFYVLKC…KTWTRKKKDL (76 aa).

This sequence belongs to the UPF0213 family.

This is UPF0213 protein BPUM_0019 from Bacillus pumilus (strain SAFR-032).